A 368-amino-acid chain; its full sequence is UDP-N-acetylglucosamine--N-acetylmuramyl-(pentapeptide) pyrophosphoryl-undecaprenol N-acetylglucosamine transferase (368 aa).

UDP-N-acetyl-alpha-D-glucosamine contacts are provided by residues 13–15 (TGG), N127, R168, S200, I254, and Q299.

This sequence belongs to the glycosyltransferase 28 family. MurG subfamily.

Its subcellular location is the cell inner membrane. The enzyme catalyses di-trans,octa-cis-undecaprenyl diphospho-N-acetyl-alpha-D-muramoyl-L-alanyl-D-glutamyl-meso-2,6-diaminopimeloyl-D-alanyl-D-alanine + UDP-N-acetyl-alpha-D-glucosamine = di-trans,octa-cis-undecaprenyl diphospho-[N-acetyl-alpha-D-glucosaminyl-(1-&gt;4)]-N-acetyl-alpha-D-muramoyl-L-alanyl-D-glutamyl-meso-2,6-diaminopimeloyl-D-alanyl-D-alanine + UDP + H(+). Its pathway is cell wall biogenesis; peptidoglycan biosynthesis. Functionally, cell wall formation. Catalyzes the transfer of a GlcNAc subunit on undecaprenyl-pyrophosphoryl-MurNAc-pentapeptide (lipid intermediate I) to form undecaprenyl-pyrophosphoryl-MurNAc-(pentapeptide)GlcNAc (lipid intermediate II). In Parabacteroides distasonis (strain ATCC 8503 / DSM 20701 / CIP 104284 / JCM 5825 / NCTC 11152), this protein is UDP-N-acetylglucosamine--N-acetylmuramyl-(pentapeptide) pyrophosphoryl-undecaprenol N-acetylglucosamine transferase.